An 85-amino-acid polypeptide reads, in one-letter code: Large ribosomal subunit protein bL31B (85 aa).

Belongs to the bacterial ribosomal protein bL31 family. Type B subfamily. As to quaternary structure, part of the 50S ribosomal subunit.

The sequence is that of Large ribosomal subunit protein bL31B from Kocuria rhizophila (strain ATCC 9341 / DSM 348 / NBRC 103217 / DC2201).